A 540-amino-acid polypeptide reads, in one-letter code: CTP synthase (540 aa).

Positions 1–267 (MKIMKFIFIT…GKLVTKKLNL (267 aa)) are amidoligase domain. Residue Ser15 participates in CTP binding. UTP is bound at residue Ser15. 16 to 21 (SLGKGI) contributes to the ATP binding site. Tyr56 provides a ligand contact to L-glutamine. Asp73 provides a ligand contact to ATP. Mg(2+)-binding residues include Asp73 and Glu141. CTP-binding positions include 148 to 150 (DIE), 188 to 193 (KTKPTQ), and Lys224. UTP contacts are provided by residues 188–193 (KTKPTQ) and Lys224. 240-242 (RDA) is an ATP binding site. Residues 292-540 (TIGIVGKYVE…VRASLGEKIK (249 aa)) form the Glutamine amidotransferase type-1 domain. Gly360 contributes to the L-glutamine binding site. The Nucleophile; for glutamine hydrolysis role is filled by Cys387. Residues 388-391 (MGMQ), Glu411, and Arg468 contribute to the L-glutamine site. Active-site residues include His513 and Glu515.

The protein belongs to the CTP synthase family. In terms of assembly, homotetramer.

It carries out the reaction UTP + L-glutamine + ATP + H2O = CTP + L-glutamate + ADP + phosphate + 2 H(+). The enzyme catalyses L-glutamine + H2O = L-glutamate + NH4(+). It catalyses the reaction UTP + NH4(+) + ATP = CTP + ADP + phosphate + 2 H(+). It participates in pyrimidine metabolism; CTP biosynthesis via de novo pathway; CTP from UDP: step 2/2. Its activity is regulated as follows. Allosterically activated by GTP, when glutamine is the substrate; GTP has no effect on the reaction when ammonia is the substrate. The allosteric effector GTP functions by stabilizing the protein conformation that binds the tetrahedral intermediate(s) formed during glutamine hydrolysis. Inhibited by the product CTP, via allosteric rather than competitive inhibition. Its function is as follows. Catalyzes the ATP-dependent amination of UTP to CTP with either L-glutamine or ammonia as the source of nitrogen. Regulates intracellular CTP levels through interactions with the four ribonucleotide triphosphates. The protein is CTP synthase of Methanocaldococcus jannaschii (strain ATCC 43067 / DSM 2661 / JAL-1 / JCM 10045 / NBRC 100440) (Methanococcus jannaschii).